The following is a 102-amino-acid chain: Small ribosomal subunit protein uS10 (102 aa).

The protein belongs to the universal ribosomal protein uS10 family. As to quaternary structure, part of the 30S ribosomal subunit.

Its function is as follows. Involved in the binding of tRNA to the ribosomes. This is Small ribosomal subunit protein uS10 from Bartonella henselae (strain ATCC 49882 / DSM 28221 / CCUG 30454 / Houston 1) (Rochalimaea henselae).